The primary structure comprises 122 residues: Large ribosomal subunit protein uL14 (122 aa).

The protein belongs to the universal ribosomal protein uL14 family. As to quaternary structure, part of the 50S ribosomal subunit. Forms a cluster with proteins L3 and L19. In the 70S ribosome, L14 and L19 interact and together make contacts with the 16S rRNA in bridges B5 and B8.

Functionally, binds to 23S rRNA. Forms part of two intersubunit bridges in the 70S ribosome. The protein is Large ribosomal subunit protein uL14 of Cutibacterium acnes (strain DSM 16379 / KPA171202) (Propionibacterium acnes).